A 27-amino-acid polypeptide reads, in one-letter code: Putative phosphoglycerate kinase (27 aa).

It belongs to the phosphoglycerate kinase family. In terms of assembly, monomer. Mg(2+) serves as cofactor.

It carries out the reaction (2R)-3-phosphoglycerate + ATP = (2R)-3-phospho-glyceroyl phosphate + ADP. The polypeptide is Putative phosphoglycerate kinase (Pinus strobus (Eastern white pine)).